Reading from the N-terminus, the 285-residue chain is Neuralized-like protein 2 (285 aa).

Positions 1-20 (MAAASEPVDSGALWGLERPE) are disordered. Residues 23–244 (PTRFHRVHGA…STKSVRLVQL (222 aa)) enclose the NHR domain. One can recognise an SOCS box domain in the interval 250 to 285 (SLQTLCRLVIQRSMVHRLAIDGLHLPKELKDFCKYE).

In terms of assembly, probable component the ECS(NEURL2) E3 ubiquitin-protein ligase complex consisting of ELOB/Elongin B, ELOC/Elongin C, CUL5, RBX1 and NEURL2. Interacts with CTNNB1. In terms of tissue distribution, expressed specifically in skeletal and cardiac muscles.

It localises to the cytoplasm. It functions in the pathway protein modification; protein ubiquitination. Plays an important role in the process of myofiber differentiation and maturation. Probable substrate-recognition component of a SCF-like ECS (Elongin BC-CUL2/5-SOCS-box protein) E3 ubiquitin-protein ligase complex, which mediates the ubiquitination of proteins. Probably contributes to catalysis through recognition and positioning of the substrate and the ubiquitin-conjugating enzyme. During myogenesis, controls the ubiquitination and degradation of the specific pool of CTNNB1/beta-catenin located at the sarcolemma. The sequence is that of Neuralized-like protein 2 (NEURL2) from Homo sapiens (Human).